Here is a 328-residue protein sequence, read N- to C-terminus: tRNA U34 carboxymethyltransferase (328 aa).

Residues Lys-91, Trp-105, Lys-110, Gly-130, 152 to 154, Met-196, Tyr-200, and Arg-315 each bind carboxy-S-adenosyl-L-methionine; that span reads DPS.

It belongs to the class I-like SAM-binding methyltransferase superfamily. CmoB family. As to quaternary structure, homotetramer.

The enzyme catalyses carboxy-S-adenosyl-L-methionine + 5-hydroxyuridine(34) in tRNA = 5-carboxymethoxyuridine(34) in tRNA + S-adenosyl-L-homocysteine + H(+). In terms of biological role, catalyzes carboxymethyl transfer from carboxy-S-adenosyl-L-methionine (Cx-SAM) to 5-hydroxyuridine (ho5U) to form 5-carboxymethoxyuridine (cmo5U) at position 34 in tRNAs. The sequence is that of tRNA U34 carboxymethyltransferase from Psychromonas ingrahamii (strain DSM 17664 / CCUG 51855 / 37).